We begin with the raw amino-acid sequence, 479 residues long: Citrate synthase, mitochondrial (479 aa).

The transit peptide at 1–37 (MSAILSTTSKSFLSRGSTRQCQNMQKALFALLNARHY) directs the protein to the mitochondrion. Residues histidine 312, histidine 358, and aspartate 413 contribute to the active site. Serine 462 is subject to Phosphoserine.

Belongs to the citrate synthase family. Monomer and homodimer. Exists as an inactive monomer when phosphorylated. Homodimerization is dependent on dephosphorylation of Ser-462 by PTC7 and is required for activity. In terms of processing, phosphorylation at Ser-462. Dephosphorylated at Ser-462 by PTC7.

It is found in the mitochondrion matrix. The catalysed reaction is oxaloacetate + acetyl-CoA + H2O = citrate + CoA + H(+). The protein operates within carbohydrate metabolism; tricarboxylic acid cycle; isocitrate from oxaloacetate: step 1/2. With respect to regulation, phosphorylation at Ser-462 inhibits catalytic activity. Dephosphorylation at Ser-462 by PTC7 enhances catalytic activity. Its function is as follows. Specific citrate synthase with catalytic activity only with acetyl-CoA. The polypeptide is Citrate synthase, mitochondrial (Saccharomyces cerevisiae (strain ATCC 204508 / S288c) (Baker's yeast)).